We begin with the raw amino-acid sequence, 858 residues long: MFRLFSSGVDDLVLVSNPSNGEVTSQIGARFDRELIYTNIGEVLIAVNPYKALPITGPEFIKLYQNASGSDASPHIYALAERAYRRMVDENESQCVIISGESGAGKTVSAKLILQYVTSVSPNNSSGGGIGGSGGGNGGIPQYDGGSDDRPSPPMGRGMGMPGMVGRGGLPTRGGGPPSRGGGPPPTRGRGGPPPPIPQNRGAPPPVSNGGAPPPVARGPVAPPPTRGAPPTRGGGPANRGGRGGGPPPVSTSRGGGGYGGSSKTVDVEHIKKVILDSNPLMEAIGNAKTVRNDNSSRFGKYLEIQFDDNNAPVGGLISTFLLEKTRVTFQQKNERNFHIFYQMLGGLDQTTKSEWGLTQATDFYYLAQSKCTTVEDVDDGKDFHEVKAAMETVGISRDEQTEIFRILAAILHVGNIRFQGEAPASVIDETPLQWAASLLGCDPTFLCQSLNHRQIQSGSARHTQYQVPQNPDQSAGLRDALAKTLYERIFDFIVARVNKAMSFSGNCKVIGVLDIYGFEVFERNSFEQFCINYVNERLQQIFIDLTVRGEQREYHEEGMKWKDISFFDNKIVVDLIDGNKPPGIMRVLDDVCKTVHAVDSAAADIKFMEKLIHSIQSHPHLVISNTGSSADEFTIKHYAGEVSYSIEEFCFKNNDNLYASIVGCLQNSTYQFIVSLFPENIQDNKQAPTTSSFKIRQSSSYLVTRLSACTPHYIRCIKPNDKKQPMNFVSSRVEHQVKYLGILENIKVKRSGYAYRQLKDIFLNRFGKIMDVQPRNVQEFVEYITRTHKDINADEFEEGKTKIFVKNPETIFVMEDLLMQKIDPIGYKNRVQAYKENEKLAQMKQGKHSMKQKCLIQ.

The Myosin motor domain maps to 7-820; the sequence is SGVDDLVLVS…TIFVMEDLLM (814 aa). 100 to 107 provides a ligand contact to ATP; that stretch reads GESGAGKT. A disordered region spans residues 121-265; sequence SPNNSSGGGI…GGGYGGSSKT (145 aa). Composition is skewed to gly residues over residues 126 to 139 and 157 to 182; these read SGGG…GNGG and RGMG…SRGG. Residues 183–228 are compositionally biased toward pro residues; that stretch reads GPPPTRGRGGPPPPIPQNRGAPPPVSNGGAPPPVARGPVAPPPTRG. A compositionally biased stretch (gly residues) spans 233 to 245; the sequence is RGGGPANRGGRGG. The segment at 712–722 is actin-binding; the sequence is PHYIRCIKPND. A tail region spans residues 821–858; it reads QKIDPIGYKNRVQAYKENEKLAQMKQGKHSMKQKCLIQ.

It belongs to the TRAFAC class myosin-kinesin ATPase superfamily. Myosin family.

Its subcellular location is the cytoplasm. Its function is as follows. Myosins are actin-based motor molecules with ATPase activity. Involved in phagocytosis and motility, and in the maintenance and dynamics of cell cortex. This is Myosin-K heavy chain (myoK) from Dictyostelium discoideum (Social amoeba).